Consider the following 145-residue polypeptide: Probable low molecular weight protein-tyrosine-phosphatase EpsP (145 aa).

Residue cysteine 9 is the Nucleophile of the active site. Arginine 15 is an active-site residue. The Proton donor role is filled by aspartate 114.

Belongs to the low molecular weight phosphotyrosine protein phosphatase family.

It carries out the reaction O-phospho-L-tyrosyl-[protein] + H2O = L-tyrosyl-[protein] + phosphate. It functions in the pathway glycan metabolism; exopolysaccharide biosynthesis. May be involved in assembly or function of the EPS I polymerization/export complex and/or the EpsB ATPase. Alternatively it may function in the removal of the terminal phosphate from C55-isoprenyl pyrophosphate in order to recycle the C55-isoprenyl phosphate lipid carrier used in the synthesis of polysaccharide repeat units. This is Probable low molecular weight protein-tyrosine-phosphatase EpsP (epsP) from Ralstonia nicotianae (strain ATCC BAA-1114 / GMI1000) (Ralstonia solanacearum).